A 75-amino-acid chain; its full sequence is MDIVTLAEVAGNLNVVGYGLAAIGPGIGLGILIGKTIEGTARQPELGSRLQTLMFLGLAFVEVLALLGFVLAFIK.

Helical transmembrane passes span 13–33 and 54–74; these read LNVV…GILI and MFLG…LAFI.

The protein belongs to the ATPase C chain family. In terms of assembly, F-type ATPases have 2 components, F(1) - the catalytic core - and F(0) - the membrane proton channel. F(1) has five subunits: alpha(3), beta(3), gamma(1), delta(1), epsilon(1). F(0) has three main subunits: a(1), b(2) and c(10-14). The alpha and beta chains form an alternating ring which encloses part of the gamma chain. F(1) is attached to F(0) by a central stalk formed by the gamma and epsilon chains, while a peripheral stalk is formed by the delta and b chains.

It is found in the cell membrane. Its function is as follows. F(1)F(0) ATP synthase produces ATP from ADP in the presence of a proton or sodium gradient. F-type ATPases consist of two structural domains, F(1) containing the extramembraneous catalytic core and F(0) containing the membrane proton channel, linked together by a central stalk and a peripheral stalk. During catalysis, ATP synthesis in the catalytic domain of F(1) is coupled via a rotary mechanism of the central stalk subunits to proton translocation. Functionally, key component of the F(0) channel; it plays a direct role in translocation across the membrane. A homomeric c-ring of between 10-14 subunits forms the central stalk rotor element with the F(1) delta and epsilon subunits. The protein is ATP synthase subunit c of Bifidobacterium adolescentis (strain ATCC 15703 / DSM 20083 / NCTC 11814 / E194a).